Reading from the N-terminus, the 417-residue chain is Tryptophan synthase beta chain (417 aa).

An N6-(pyridoxal phosphate)lysine modification is found at Lys111.

This sequence belongs to the TrpB family. As to quaternary structure, tetramer of two alpha and two beta chains. The cofactor is pyridoxal 5'-phosphate.

The catalysed reaction is (1S,2R)-1-C-(indol-3-yl)glycerol 3-phosphate + L-serine = D-glyceraldehyde 3-phosphate + L-tryptophan + H2O. The protein operates within amino-acid biosynthesis; L-tryptophan biosynthesis; L-tryptophan from chorismate: step 5/5. Its function is as follows. The beta subunit is responsible for the synthesis of L-tryptophan from indole and L-serine. The protein is Tryptophan synthase beta chain of Fervidobacterium nodosum (strain ATCC 35602 / DSM 5306 / Rt17-B1).